Reading from the N-terminus, the 335-residue chain is Glucokinase (335 aa).

11–16 is an ATP binding site; the sequence is ADIGGT.

The protein belongs to the bacterial glucokinase family.

The protein localises to the cytoplasm. It catalyses the reaction D-glucose + ATP = D-glucose 6-phosphate + ADP + H(+). The sequence is that of Glucokinase from Xanthomonas oryzae pv. oryzae (strain MAFF 311018).